The sequence spans 438 residues: Putative F-box protein At5g15660 (438 aa).

The segment at 1–24 (MRRRSKKIKTENNSNPETSEERNK) is disordered. Residues 22–68 (RNKFDEIPHDLVIEILERLPLKSVARFLTVSKLWATTIRSPDFRKSY) enclose the F-box domain.

The sequence is that of Putative F-box protein At5g15660 from Arabidopsis thaliana (Mouse-ear cress).